We begin with the raw amino-acid sequence, 379 residues long: Anhydro-N-acetylmuramic acid kinase (379 aa).

Residue 9–16 (GTSADGVD) participates in ATP binding.

The protein belongs to the anhydro-N-acetylmuramic acid kinase family.

The enzyme catalyses 1,6-anhydro-N-acetyl-beta-muramate + ATP + H2O = N-acetyl-D-muramate 6-phosphate + ADP + H(+). The protein operates within amino-sugar metabolism; 1,6-anhydro-N-acetylmuramate degradation. It functions in the pathway cell wall biogenesis; peptidoglycan recycling. In terms of biological role, catalyzes the specific phosphorylation of 1,6-anhydro-N-acetylmuramic acid (anhMurNAc) with the simultaneous cleavage of the 1,6-anhydro ring, generating MurNAc-6-P. Is required for the utilization of anhMurNAc either imported from the medium or derived from its own cell wall murein, and thus plays a role in cell wall recycling. This is Anhydro-N-acetylmuramic acid kinase from Synechococcus sp. (strain CC9605).